Reading from the N-terminus, the 198-residue chain is Glycerol-3-phosphate acyltransferase 2 (198 aa).

A run of 4 helical transmembrane segments spans residues 4–24 (TYLLFIVAYLLGSIPFALVVG), 71–91 (LPMVFGLDIHPLWFGLAAVLG), 113–133 (LLCYSPVVFAILAVVFFTLLF), and 147–167 (VVAVIASIVSGDKIFIIAMCL).

This sequence belongs to the PlsY family. As to quaternary structure, probably interacts with PlsX.

It localises to the cell membrane. The enzyme catalyses an acyl phosphate + sn-glycerol 3-phosphate = a 1-acyl-sn-glycero-3-phosphate + phosphate. It functions in the pathway lipid metabolism; phospholipid metabolism. Functionally, catalyzes the transfer of an acyl group from acyl-phosphate (acyl-PO(4)) to glycerol-3-phosphate (G3P) to form lysophosphatidic acid (LPA). This enzyme utilizes acyl-phosphate as fatty acyl donor, but not acyl-CoA or acyl-ACP. The sequence is that of Glycerol-3-phosphate acyltransferase 2 from Bacillus cereus (strain ZK / E33L).